Consider the following 111-residue polypeptide: Nucleoid-associated protein SynRCC307_0025 (111 aa).

Belongs to the YbaB/EbfC family. In terms of assembly, homodimer.

It localises to the cytoplasm. The protein resides in the nucleoid. Its function is as follows. Binds to DNA and alters its conformation. May be involved in regulation of gene expression, nucleoid organization and DNA protection. The sequence is that of Nucleoid-associated protein SynRCC307_0025 from Synechococcus sp. (strain RCC307).